We begin with the raw amino-acid sequence, 466 residues long: MAKGASISGFPEWLPSERVVEQRVIDTLRKVFELNGFIGIETRAVETGASLLKKGETSKEIYLLSRLQEVGHESDTPIEERLGLHFDLTVPLSRYVVEHSGALAFPFKRWQIQKVWRGERPQEGRFREFVQADIDVIGAGDLPDHYEVELPLVMVSALEELRAYGLPKATVHANNRKLSEGFYRGLGLTDVEGVLREIDKLDKIGADEVARLLTETCGATEAQARACLELAELTASDGAELAAKFDALCESHGIAKDSEAYTLARQGLDTLAMIVDEAAAIRPGSVIADLKIARGLDYYTGSVYETFLDGAASLGSICSGGRYDNLASQGNRKYPGVGLSIGLSRLVSYMLHAAGAHANRVSPAAVLVAVWNEEDRPAANRIANQLRARGIATDVAPTAAKLGKQIKYADKLGIPYVWFPATAAEGAEGAEPAGDEVKNIVTGEQVAADCTSWEPDTVVAQQTVEI.

This sequence belongs to the class-II aminoacyl-tRNA synthetase family. Homodimer.

Its subcellular location is the cytoplasm. It catalyses the reaction tRNA(His) + L-histidine + ATP = L-histidyl-tRNA(His) + AMP + diphosphate + H(+). This is Histidine--tRNA ligase from Bifidobacterium longum subsp. infantis (strain ATCC 15697 / DSM 20088 / JCM 1222 / NCTC 11817 / S12).